We begin with the raw amino-acid sequence, 270 residues long: tRNA (guanine-N(1)-)-methyltransferase (270 aa).

Residues glycine 113 and 133 to 138 (IGDYVL) contribute to the S-adenosyl-L-methionine site. The interval 251-270 (APTEGTGLIHHRDVEGPGEG) is disordered. Residues 260–270 (HHRDVEGPGEG) show a composition bias toward basic and acidic residues.

This sequence belongs to the RNA methyltransferase TrmD family. In terms of assembly, homodimer.

It localises to the cytoplasm. It carries out the reaction guanosine(37) in tRNA + S-adenosyl-L-methionine = N(1)-methylguanosine(37) in tRNA + S-adenosyl-L-homocysteine + H(+). Functionally, specifically methylates guanosine-37 in various tRNAs. The chain is tRNA (guanine-N(1)-)-methyltransferase from Frankia casuarinae (strain DSM 45818 / CECT 9043 / HFP020203 / CcI3).